The sequence spans 60 residues: Large ribosomal subunit protein bL32 (60 aa).

Belongs to the bacterial ribosomal protein bL32 family.

The chain is Large ribosomal subunit protein bL32 from Petrotoga mobilis (strain DSM 10674 / SJ95).